Reading from the N-terminus, the 180-residue chain is Oligoribonuclease (180 aa).

Positions 7–170 (LIWIDLEMTG…DDIRESIAEL (164 aa)) constitute an Exonuclease domain. Tyrosine 128 is a catalytic residue.

It belongs to the oligoribonuclease family.

The protein resides in the cytoplasm. In terms of biological role, 3'-to-5' exoribonuclease specific for small oligoribonucleotides. This chain is Oligoribonuclease, found in Pseudomonas aeruginosa (strain UCBPP-PA14).